Consider the following 932-residue polypeptide: Transcription initiation factor TFIID subunit 3 (932 aa).

Disordered stretches follow at residues 130–201, 213–347, 403–465, and 480–579; these read PIVS…LSTK, REPL…PSAM, REPD…DNSW, and LGAP…PWRE. Acidic residues predominate over residues 158–171; that stretch reads LEEDDEMEEEEVIN. Phosphoserine occurs at positions 183, 199, 229, and 243. Position 266 is an N6-acetyllysine (lysine 266). Residues 266–283 show a composition bias toward polar residues; sequence KSFTPKTKTKASSPGQKT. A phosphoserine mark is found at serine 291, serine 297, and serine 301. A compositionally biased stretch (low complexity) spans 408–423; that stretch reads FEFSSGSESEGDTFTS. Polar residues predominate over residues 436–446; the sequence is KASTSSNNFTK. Over residues 447 to 461 the composition is skewed to low complexity; the sequence is SLATPLPLSSGTSSS. At threonine 502 the chain carries Phosphothreonine. The span at 505–515 shows a compositional bias: basic and acidic residues; the sequence is PLHKGYEEKAK. Residues 524-538 show a composition bias toward basic residues; the sequence is KKLKKELKTKLKKKE. Over residues 539-579 the composition is skewed to basic and acidic residues; the sequence is KQRDRERERERNKERSKEKDKMREREKEKEAGKELKYPWRE. Lysine 582 participates in a covalent cross-link: Glycyl lysine isopeptide (Lys-Gly) (interchain with G-Cter in SUMO2). The tract at residues 607 to 657 is disordered; the sequence is KDGIVRREREKHKDKKKDRERSKREKDKRERERLKEKNREDKIKAPPTQLV. Over residues 623–650 the composition is skewed to basic and acidic residues; that stretch reads KDRERSKREKDKRERERLKEKNREDKIK. A Phosphoserine modification is found at serine 669. The disordered stretch occupies residues 681 to 746; the sequence is AFSPMLPEKL…EKEKEKHKHE (66 aa). Residues 689 to 702 show a composition bias toward basic and acidic residues; sequence KLFEEKEKPKEKER. Positions 703 to 714 are enriched in basic residues; sequence KKDKKEKKKKKE. Residues 715 to 740 show a composition bias toward basic and acidic residues; it reads KEKEKEKKEREREKERREREKREKEK. Residue lysine 749 forms a Glycyl lysine isopeptide (Lys-Gly) (interchain with G-Cter in SUMO2) linkage. Serine 758 carries the post-translational modification Phosphoserine. Position 779 is an N6-acetyllysine (lysine 779). The segment at 867–917 adopts a PHD-type zinc-finger fold; it reads IWICPGCNKPDDGSPMIGCDDCDDWYHWPCVGIMAAPPEEMQWFCPKCANK.

It belongs to the TAF3 family. As to quaternary structure, component of the TFIID basal transcription factor complex, composed of TATA-box-binding protein TBP, and a number of TBP-associated factors (TAFs), including TAF1, TAF2, TAF3, TAF4, TAF5, TAF6, TAF7, TAF8, TAF9, TAF10, TAF11, TAF12 and TAF13. Interacts with TAF10 via histone fold. Interacts with TAF13, TBP, SAP130 and GCN5L2. Interacts with TBPL2.

The protein localises to the nucleus. Its function is as follows. The TFIID basal transcription factor complex plays a major role in the initiation of RNA polymerase II (Pol II)-dependent transcription. TFIID recognizes and binds promoters with or without a TATA box via its subunit TBP, a TATA-box-binding protein, and promotes assembly of the pre-initiation complex (PIC). The TFIID complex consists of TBP and TBP-associated factors (TAFs), including TAF1, TAF2, TAF3, TAF4, TAF5, TAF6, TAF7, TAF8, TAF9, TAF10, TAF11, TAF12 and TAF13. The TFIID complex structure can be divided into 3 modules TFIID-A, TFIID-B, and TFIID-C. TAF3 forms the TFIID-A module together with TAF5 and TBP. Required in complex with TBPL2 for the differentiation of myoblasts into myocytes. The TAF3-TBPL2 complex replaces TFIID at specific promoters at an early stage in the differentiation process. The polypeptide is Transcription initiation factor TFIID subunit 3 (Taf3) (Mus musculus (Mouse)).